We begin with the raw amino-acid sequence, 216 residues long: Holliday junction branch migration complex subunit RuvA (216 aa).

Residues 1-64 are domain I; sequence MISFIKGVLI…EDAQQLYGFK (64 aa). The tract at residues 65–143 is domain II; that stretch reads SKVDKKVFQE…KMANEIYAQT (79 aa). The tract at residues 144 to 163 is flexible linker; that stretch reads SGTTTTSQDSQAQQAPTSAV. The tract at residues 164 to 216 is domain III; the sequence is LANSIFNESVDALLALGYKQKDAEKMSRSAMGDATTAAEVIRKALQGSIRSKR.

This sequence belongs to the RuvA family. As to quaternary structure, homotetramer. Forms an RuvA(8)-RuvB(12)-Holliday junction (HJ) complex. HJ DNA is sandwiched between 2 RuvA tetramers; dsDNA enters through RuvA and exits via RuvB. An RuvB hexamer assembles on each DNA strand where it exits the tetramer. Each RuvB hexamer is contacted by two RuvA subunits (via domain III) on 2 adjacent RuvB subunits; this complex drives branch migration. In the full resolvosome a probable DNA-RuvA(4)-RuvB(12)-RuvC(2) complex forms which resolves the HJ.

It localises to the cytoplasm. In terms of biological role, the RuvA-RuvB-RuvC complex processes Holliday junction (HJ) DNA during genetic recombination and DNA repair, while the RuvA-RuvB complex plays an important role in the rescue of blocked DNA replication forks via replication fork reversal (RFR). RuvA specifically binds to HJ cruciform DNA, conferring on it an open structure. The RuvB hexamer acts as an ATP-dependent pump, pulling dsDNA into and through the RuvAB complex. HJ branch migration allows RuvC to scan DNA until it finds its consensus sequence, where it cleaves and resolves the cruciform DNA. This chain is Holliday junction branch migration complex subunit RuvA, found in Francisella tularensis subsp. novicida (strain U112).